A 383-amino-acid polypeptide reads, in one-letter code: Adaptive-response sensory kinase SasA (383 aa).

The Histidine kinase domain maps to methionine 161–arginine 383. Histidine 164 is subject to Phosphohistidine; by autocatalysis.

In terms of assembly, homooligomerizes. Interacts with KaiC1. Interacts with KaiC1 and RpaA. Binds to the B-loop in the CI domain of KaiC; SasA and KaiB compete to bind to the CI domain.

The catalysed reaction is ATP + protein L-histidine = ADP + protein N-phospho-L-histidine.. Member of the two-component regulatory system SasA/RpaA involved in genome-wide circadian gene expression. One of several clock output pathways. Participates in the Kai clock protein complex, the main circadian regulator in cyanobacteria, via its interaction with KaiC. KaiC enhances the autophosphorylation activity of SasA, which then transfers its phosphate group to RpaA to activate it. In addition to its output function, recruits fold-shifted KaiB (KaiB(fs)) to KaiC to cooperatively form the KaiB(6):KaiC(6) complex (independent of SasA kinase activity). Required for robustness of the circadian rhythm of gene expression and is involved in clock output, also required for adaptation to light/dark cycles. Functionally, plays an important role in glucose metabolism, important for expression of genes involved in glycolysis, gluconeogenesis, the oxidative pentose phosphate pathway, and glycogen metabolism. Required for heterotrophic growth. Overexpression from the psbAII promoter leads to altered levels of genes involved in carbon metabolism, increased levels of transcripts for clock oscillator genes in the light and the dark, complete loss of glycogen accumulation, decreased levels of metabolites of sugar catabolism and increased levels of amino acids in the light and increased levels of SigE protein. This Synechocystis sp. (strain ATCC 27184 / PCC 6803 / Kazusa) protein is Adaptive-response sensory kinase SasA.